The chain runs to 255 residues: MSSFKEFKIKWGMVIDLDKCTGCGACMVACQAENNIAPQPDASNKLKSLNWLVVYELNNGKPFPEHDVAYLPRPCMQCGKPSCVSVCPVVATDKNEEGGIVSQVYPRCIGCRYCMASCPYHARYFNWFDPTWPEGMDKTLTPDVSVRPRGVVEKCTFCHHRFMQAKDKARVEGRDPSALRDGDYVTSCTEACPNGAIIFGDFNNPEHRVHELHKSKYAFRLLERLGTDPQVYYLSRREWVRRLGDNYLEHEKVKG.

4Fe-4S ferredoxin-type domains are found at residues 11–41 (WGMV…PQPD), 66–97 (HDVA…KNEE), and 99–128 (GIVS…FNWF). Residues cysteine 20, cysteine 23, cysteine 26, cysteine 30, cysteine 75, cysteine 78, cysteine 83, cysteine 87, cysteine 108, cysteine 111, cysteine 114, and cysteine 118 each contribute to the [4Fe-4S] cluster site. Residues cysteine 155, cysteine 158, cysteine 188, and cysteine 192 each contribute to the [3Fe-4S] cluster site.

The Qrc complex is composed of four subunits: QrcA, QrcB, QrcC and QrcD. Can form a supercomplex with the [NiFe] hydrogenase HynA1 and the tetraheme Type I cytochrome c3 TpIc(3), its physiological electron donors. Requires [4Fe-4S] cluster as cofactor. It depends on [3Fe-4S] cluster as a cofactor.

The protein resides in the periplasm. Functionally, component of the respiratory Qrc complex, that catalyzes the reduction of the menaquinone pool using electrons transferred from the reduced periplasmic cytochrome c3, and which is probably involved in sulfate respiration. Is likely essential for growth on H(2) or formate since the periplasmic hydrogenases and/or formate dehydrogenases act as primary electron donors for the Qrc complex. QrcC is an electron-transferring subunit; its cubane iron sulfur clusters form a pathway for electron transfer between the hemes of QrcA and the membrane quinone pool. This is Menaquinone reductase, iron-sulfur cluster-binding subunit from Nitratidesulfovibrio vulgaris (strain ATCC 29579 / DSM 644 / CCUG 34227 / NCIMB 8303 / VKM B-1760 / Hildenborough) (Desulfovibrio vulgaris).